The primary structure comprises 402 residues: tRNA pseudouridine synthase Pus10 (402 aa).

Residue aspartate 215 is the Nucleophile of the active site. The segment at 370–402 (ERGGHPGARGGTRRRPRKGPARPAGGRDRPRKT) is disordered. Residues 380-389 (GTRRRPRKGP) are compositionally biased toward basic residues.

The protein belongs to the pseudouridine synthase Pus10 family.

The catalysed reaction is uridine(54) in tRNA = pseudouridine(54) in tRNA. It catalyses the reaction uridine(55) in tRNA = pseudouridine(55) in tRNA. In terms of biological role, responsible for synthesis of pseudouridine from uracil-54 and uracil-55 in the psi GC loop of transfer RNAs. The sequence is that of tRNA pseudouridine synthase Pus10 from Cenarchaeum symbiosum (strain A).